Here is a 75-residue protein sequence, read N- to C-terminus: Stewaprin-a (75 aa).

A signal peptide spans 1–24; sequence MSSGGLLLLLGLLTLWAELIPVSG. Residues 27–72 form the WAP domain; it reads HPKKPGLCPPRPQKPPCVRECKNDWSCPGEQKCCRYGCIFECRDPI. 4 cysteine pairs are disulfide-bonded: Cys34/Cys60, Cys43/Cys64, Cys47/Cys59, and Cys53/Cys68.

Belongs to the venom waprin family. As to expression, expressed by the venom gland.

It is found in the secreted. Damages membranes of susceptible bacteria. Has no hemolytic activity. Not toxic to mice. Does not inhibit the proteinases elastase and cathepsin G. The protein is Stewaprin-a of Hoplocephalus stephensii (Stephens's banded snake).